Here is a 130-residue protein sequence, read N- to C-terminus: Small ribosomal subunit protein uS9 (130 aa).

It belongs to the universal ribosomal protein uS9 family.

This Cupriavidus metallidurans (strain ATCC 43123 / DSM 2839 / NBRC 102507 / CH34) (Ralstonia metallidurans) protein is Small ribosomal subunit protein uS9.